A 976-amino-acid chain; its full sequence is Ephrin type-B receptor 4b (976 aa).

The N-terminal stretch at 1–23 (MDRVCWIMALSWFWMVSTGLVSA) is a signal peptide. Topologically, residues 24 to 541 (EEEVLMNTKL…ESPSRLMLTG (518 aa)) are extracellular. The Eph LBD domain maps to 25–204 (EEVLMNTKLE…FFKKCPAVSR (180 aa)). Intrachain disulfides connect cysteine 69–cysteine 186 and cysteine 103–cysteine 113. 2 Fibronectin type-III domains span residues 326 to 434 (PPSA…TSRD) and 438 to 529 (PVSG…TLPD). Residues 542–562 (VLVAIGLLILIAVVIVAVFCF) form a helical membrane-spanning segment. The Cytoplasmic segment spans residues 563-976 (RRSTRRRDPD…LRIHGGSLRY (414 aa)). A Protein kinase domain is found at 613–897 (VKIEEVIGAG…IPDGPSHPLL (285 aa)). Residues 619–627 (IGAGEFGEV) and lysine 645 contribute to the ATP site. Residue aspartate 738 is the Proton acceptor of the active site. The 65-residue stretch at 906–970 (SHCSSVADWL…LSSVQTLRIH (65 aa)) folds into the SAM domain.

This sequence belongs to the protein kinase superfamily. Tyr protein kinase family. Ephrin receptor subfamily.

It is found in the cell membrane. It carries out the reaction L-tyrosyl-[protein] + ATP = O-phospho-L-tyrosyl-[protein] + ADP + H(+). Functionally, receptor tyrosine kinase which binds promiscuously transmembrane ephrin-B family ligands residing on adjacent cells, leading to contact-dependent bidirectional signaling into neighboring cells. The signaling pathway downstream of the receptor is referred to as forward signaling while the signaling pathway downstream of the ephrin ligand is referred to as reverse signaling. Together with its cognate ligand/functional ligand EFNB2 is involved in the regulation of cell adhesion and cell migration, and plays a central role in heart morphogenesis, angiogenesis and blood vessel remodeling and permeability. EPHB4-mediated forward signaling controls cellular repulsion and segregation from EFNB2-expressing cells. Involved in somitogenesis. This chain is Ephrin type-B receptor 4b, found in Danio rerio (Zebrafish).